The primary structure comprises 179 residues: Deoxyuridine 5'-triphosphate nucleotidohydrolase (179 aa).

Substrate is bound by residues 90-92 (RSG), N103, 107-109 (TVD), and K117.

The protein belongs to the dUTPase family. It depends on Mg(2+) as a cofactor.

The enzyme catalyses dUTP + H2O = dUMP + diphosphate + H(+). Its pathway is pyrimidine metabolism; dUMP biosynthesis; dUMP from dCTP (dUTP route): step 2/2. This enzyme is involved in nucleotide metabolism: it produces dUMP, the immediate precursor of thymidine nucleotides and it decreases the intracellular concentration of dUTP so that uracil cannot be incorporated into DNA. The sequence is that of Deoxyuridine 5'-triphosphate nucleotidohydrolase from Thermobifida fusca (strain YX).